We begin with the raw amino-acid sequence, 61 residues long: Metallothionein-1H (61 aa).

Met1 carries the N-acetylmethionine modification. Residues 1–29 (MDPNCSCEAGGSCACAGSCKCKKCKCTSC) are beta. A divalent metal cation-binding residues include Cys5, Cys7, Cys13, Cys15, Cys19, Cys21, Cys24, Cys26, Cys29, Cys33, Cys34, Cys36, Cys37, Cys41, Cys44, Cys48, Cys50, and Cys57. The tract at residues 30-61 (KKSCCSCCPLGCAKCAQGCICKGASEKCSCCA) is alpha. A Phosphoserine modification is found at Ser58. Positions 59 and 60 each coordinate a divalent metal cation.

This sequence belongs to the metallothionein superfamily. Type 1 family. As to quaternary structure, monomer.

Metallothioneins have a high content of cysteine residues that bind various heavy metals; these proteins are transcriptionally regulated by both heavy metals and glucocorticoids. The polypeptide is Metallothionein-1H (MT1H) (Homo sapiens (Human)).